Reading from the N-terminus, the 42-residue chain is Cytochrome b6-f complex subunit 7 (42 aa).

Residues 19-37 (AVTCIFMTLFGLSLGFALL) form a helical membrane-spanning segment.

The protein belongs to the PetM family. As to quaternary structure, the 4 large subunits of the cytochrome b6-f complex are cytochrome b6, subunit IV (17 kDa polypeptide, PetD), cytochrome f and the Rieske protein, while the 4 small subunits are PetG, PetL, PetM and PetN. The complex functions as a dimer.

The protein localises to the plastid. The protein resides in the chloroplast thylakoid membrane. In terms of biological role, component of the cytochrome b6-f complex, which mediates electron transfer between photosystem II (PSII) and photosystem I (PSI), cyclic electron flow around PSI, and state transitions. The polypeptide is Cytochrome b6-f complex subunit 7 (Thalassiosira pseudonana (Marine diatom)).